Here is a 209-residue protein sequence, read N- to C-terminus: Large ribosomal subunit protein bL25 (209 aa).

Residues 190 to 209 (LKSEEAASEGAAEEEAKDGE) are disordered. Acidic residues predominate over residues 200–209 (AAEEEAKDGE).

It belongs to the bacterial ribosomal protein bL25 family. CTC subfamily. Part of the 50S ribosomal subunit; part of the 5S rRNA/L5/L18/L25 subcomplex. Contacts the 5S rRNA. Binds to the 5S rRNA independently of L5 and L18.

Its function is as follows. This is one of the proteins that binds to the 5S RNA in the ribosome where it forms part of the central protuberance. In Brucella anthropi (strain ATCC 49188 / DSM 6882 / CCUG 24695 / JCM 21032 / LMG 3331 / NBRC 15819 / NCTC 12168 / Alc 37) (Ochrobactrum anthropi), this protein is Large ribosomal subunit protein bL25.